The sequence spans 880 residues: Beta-N-acetylglucosaminidase (880 aa).

A signal peptide spans 1–27 (MKKRLIAPMLLSAASLAFFAMSGSAQA). 3 consecutive SPOR domains span residues 70–149 (SGTT…VKAY), 150–229 (GAAQ…LKET), and 230–311 (VKGQ…YQQV). Tandem repeats lie at residues 439–473 (ITTESLLDQTKVNQALTFFKSNHISVASQKTGQTA) and 479–513 (ITTEAIISQEEIDRVLTFFKQNHIAVTTSKTGQTA). The SH3b domain occupies 630-700 (TATSTVTADV…VDPNNFSRDS (71 aa)).

The protein belongs to the glycosyl hydrolase 73 family. As to quaternary structure, homodimer.

It localises to the secreted. It is found in the cell wall. It carries out the reaction an N(4)-(oligosaccharide-(1-&gt;3)-[oligosaccharide-(1-&gt;6)]-beta-D-Man-(1-&gt;4)-beta-D-GlcNAc-(1-&gt;4)-alpha-D-GlcNAc)-L-asparaginyl-[protein] + H2O = an oligosaccharide-(1-&gt;3)-[oligosaccharide-(1-&gt;6)]-beta-D-Man-(1-&gt;4)-D-GlcNAc + N(4)-(N-acetyl-beta-D-glucosaminyl)-L-asparaginyl-[protein]. With respect to regulation, inhibited by diethyl pyrocarbonate, slightly by EDTA. Not inhibited by PMSF, diisopropyl fluorophosphate, 2-mercaptoethanol or N-ethylmaleimide. Its function is as follows. Cell wall hydrolase not involved in cell autolysis, competence, sporulation or germination. It hydrolyzes the beta-1,4 glycan bond between the N-acetylglucosaminyl and the N-acetylmuramoyl residues in the glycan chain. The sequence is that of Beta-N-acetylglucosaminidase (lytD) from Bacillus subtilis (strain 168).